Consider the following 377-residue polypeptide: MYSSEELWNSTEQVWINGSGTNFSLGRHEDDEEEEGDKHPFFTDAWLVPLFFSLIMLVGLVGNSLVIYVISKHRQMRTATNFYIANLAATDIIFLVCCVPFTATLYPLPGWIFGNFMCKFVAFLQQVTVQATCITLTAMSGDRCYVTVYPLKSLRHRTPKVAMIVSICIWIGSFVLSTPILMYQRIEEGYWYGPRQYCMERFPSKTHERAFILYQFIAAYLLPVLTISFCYTLMVKRVGQPTVEPVDNNYQVNLLSERTISIRSKVSKMVVVIVLLFAICWGPIQIFVLFQSFYPNYQPNYATYKIKTWANCMSYANSSVNPIVYGFMGASFQKSFRKTFPFLFKHKVRDSSMASRTANAEIKFVAAEEGNNNNAVN.

The Extracellular segment spans residues 1-49 (MYSSEELWNSTEQVWINGSGTNFSLGRHEDDEEEEGDKHPFFTDAWLVP). 3 N-linked (GlcNAc...) asparagine glycosylation sites follow: Asn9, Asn17, and Asn22. A helical transmembrane segment spans residues 50 to 70 (LFFSLIMLVGLVGNSLVIYVI). Over 71 to 91 (SKHRQMRTATNFYIANLAATD) the chain is Cytoplasmic. The chain crosses the membrane as a helical span at residues 92–112 (IIFLVCCVPFTATLYPLPGWI). Residues 113–119 (FGNFMCK) lie on the Extracellular side of the membrane. A disulfide bridge links Cys118 with Cys198. A helical membrane pass occupies residues 120–140 (FVAFLQQVTVQATCITLTAMS). Over 141–160 (GDRCYVTVYPLKSLRHRTPK) the chain is Cytoplasmic. A helical membrane pass occupies residues 161–181 (VAMIVSICIWIGSFVLSTPIL). Over 182–209 (MYQRIEEGYWYGPRQYCMERFPSKTHER) the chain is Extracellular. Residues 210–230 (AFILYQFIAAYLLPVLTISFC) traverse the membrane as a helical segment. Residues 231 to 269 (YTLMVKRVGQPTVEPVDNNYQVNLLSERTISIRSKVSKM) lie on the Cytoplasmic side of the membrane. The chain crosses the membrane as a helical span at residues 270–290 (VVVIVLLFAICWGPIQIFVLF). Over 291 to 305 (QSFYPNYQPNYATYK) the chain is Extracellular. A helical transmembrane segment spans residues 306-328 (IKTWANCMSYANSSVNPIVYGFM). Topologically, residues 329 to 377 (GASFQKSFRKTFPFLFKHKVRDSSMASRTANAEIKFVAAEEGNNNNAVN) are cytoplasmic.

The protein belongs to the G-protein coupled receptor 1 family. In terms of tissue distribution, expressed in a significantly high percentage (45-60%) of mature GnRH1, GnRH2, and GnRH3 neurons and in immature GnRH3 neurons, which had migrated to the vicinity of their final locations in the brain. Only 5% of immature GnRH1 and GnRH2 neurons have receptor transcripts.

Its subcellular location is the cell membrane. Its function is as follows. Receptor speculated to be essential for sexual development. May regulate gonadotropin-releasing hormone (GnRH) secretion. The receptor expression could be a 'stop signal' for GnRH1, GnRH2, and GnRH3 neuronal migration, leading to suppression of cell growth and modulation of GnRH secretion, which is important for normal sexual development. The sequence is that of G-protein coupled receptor 54 (gpr54) from Oreochromis niloticus (Nile tilapia).